We begin with the raw amino-acid sequence, 339 residues long: ADP-L-glycero-D-manno-heptose-6-epimerase (339 aa).

NADP(+) contacts are provided by residues 11-12 (FI), 32-33 (DD), lysine 39, lysine 54, 75-79 (EGACS), and asparagine 92. Tyrosine 139 functions as the Proton acceptor in the catalytic mechanism. NADP(+) is bound at residue lysine 143. Asparagine 170 serves as a coordination point for substrate. Positions 171 and 179 each coordinate NADP(+). The active-site Proton acceptor is lysine 179. Substrate-binding positions include arginine 181, histidine 188, 202-205 (FGEY), arginine 215, and tyrosine 294.

It belongs to the NAD(P)-dependent epimerase/dehydratase family. HldD subfamily. As to quaternary structure, homopentamer. The cofactor is NADP(+).

It carries out the reaction ADP-D-glycero-beta-D-manno-heptose = ADP-L-glycero-beta-D-manno-heptose. It functions in the pathway nucleotide-sugar biosynthesis; ADP-L-glycero-beta-D-manno-heptose biosynthesis; ADP-L-glycero-beta-D-manno-heptose from D-glycero-beta-D-manno-heptose 7-phosphate: step 4/4. Its function is as follows. Catalyzes the interconversion between ADP-D-glycero-beta-D-manno-heptose and ADP-L-glycero-beta-D-manno-heptose via an epimerization at carbon 6 of the heptose. This is ADP-L-glycero-D-manno-heptose-6-epimerase from Polynucleobacter necessarius subsp. necessarius (strain STIR1).